A 147-amino-acid polypeptide reads, in one-letter code: Large ribosomal subunit protein uL13 (147 aa).

Belongs to the universal ribosomal protein uL13 family. Part of the 50S ribosomal subunit.

This protein is one of the early assembly proteins of the 50S ribosomal subunit, although it is not seen to bind rRNA by itself. It is important during the early stages of 50S assembly. The sequence is that of Large ribosomal subunit protein uL13 from Mycolicibacterium smegmatis (strain ATCC 700084 / mc(2)155) (Mycobacterium smegmatis).